A 416-amino-acid polypeptide reads, in one-letter code: Enterobactin exporter EntS (416 aa).

Over 1–21 (MNKQSWLLNLSLLKTHPAFRA) the chain is Cytoplasmic. Residues 22-42 (VFLARFISIVSLGLLGVAVPV) traverse the membrane as a helical segment. At 43-55 (QIQMMTHSTWQVG) the chain is on the periplasmic side. A helical membrane pass occupies residues 56–76 (LSVTLTGGAMFVGLMVGGVLA). Residues 77–83 (DRYERKK) are Cytoplasmic-facing. Residues 84-104 (VILLARGTCGIGFIGLCLNAL) form a helical membrane-spanning segment. Topologically, residues 105–109 (LPEPS) are periplasmic. The chain crosses the membrane as a helical span at residues 110–130 (LLAIYLLGLWDGFFASLGVTA). The Cytoplasmic segment spans residues 131 to 156 (LLAATPALVGRENLMQAGAITMLTVR). A helical transmembrane segment spans residues 157-177 (LGSVNSPMIGGLLLAIGGVAW). Asn-178 is a topological domain (periplasmic). A helical transmembrane segment spans residues 179–199 (YGLAAAGTFITLLPLLSLPAL). The Cytoplasmic segment spans residues 200 to 218 (PPPPQPREHPLKSLLAGFR). The chain crosses the membrane as a helical span at residues 219 to 239 (FLLASPLVGGIALLGGLLTMA). At 240–256 (SAVRVLYPALADNWQMS) the chain is on the periplasmic side. A helical transmembrane segment spans residues 257 to 277 (AAQIGFLYAAIPLGAAIGALT). At 278–287 (SGKLAHSARP) the chain is on the cytoplasmic side. The chain crosses the membrane as a helical span at residues 288-307 (GLLMLLSTLGSFLAIGLFGL). At 308–313 (MPMWIL) the chain is on the periplasmic side. The helical transmembrane segment at 314 to 336 (GVVCLALFGWLSAVSSLLQYTML) threads the bilayer. At 337 to 356 (QTQTPEVMLGRINGLWTAQN) the chain is on the cytoplasmic side. A helical membrane pass occupies residues 357 to 377 (VTGDAIGAALLGGLGAMMTPV). Position 378 (Ala-378) is a topological domain, periplasmic. Residues 379–399 (SASASGFGLLIIGVLLLLVLV) traverse the membrane as a helical segment. The Cytoplasmic portion of the chain corresponds to 400–416 (ELRHFRQTPPQVTASDS).

The protein belongs to the major facilitator superfamily. EntS (TC 2.A.1.38) family.

The protein localises to the cell inner membrane. Its function is as follows. Component of an export pathway for enterobactin. The sequence is that of Enterobactin exporter EntS from Shigella dysenteriae serotype 1 (strain Sd197).